An 86-amino-acid polypeptide reads, in one-letter code: Small ribosomal subunit protein bS20 (86 aa).

The protein belongs to the bacterial ribosomal protein bS20 family.

Binds directly to 16S ribosomal RNA. The polypeptide is Small ribosomal subunit protein bS20 (Pseudarthrobacter chlorophenolicus (strain ATCC 700700 / DSM 12829 / CIP 107037 / JCM 12360 / KCTC 9906 / NCIMB 13794 / A6) (Arthrobacter chlorophenolicus)).